Consider the following 102-residue polypeptide: Nucleoid-associated protein WS1681 (102 aa).

Belongs to the YbaB/EbfC family. As to quaternary structure, homodimer.

It is found in the cytoplasm. The protein resides in the nucleoid. In terms of biological role, binds to DNA and alters its conformation. May be involved in regulation of gene expression, nucleoid organization and DNA protection. The protein is Nucleoid-associated protein WS1681 of Wolinella succinogenes (strain ATCC 29543 / DSM 1740 / CCUG 13145 / JCM 31913 / LMG 7466 / NCTC 11488 / FDC 602W) (Vibrio succinogenes).